Consider the following 235-residue polypeptide: Cell division protein FtsQ (235 aa).

Residues 1 to 6 (MERLTR) lie on the Cytoplasmic side of the membrane. A helical membrane pass occupies residues 7 to 25 (WLLVMMAMLLAASGLVWFY). The Periplasmic segment spans residues 26-235 (NSNHLPVKQV…DGLPEKESEE (210 aa)). The POTRA domain occupies 30–99 (LPVKQVSLKG…DTVEVVLTER (70 aa)).

The protein belongs to the FtsQ/DivIB family. FtsQ subfamily. In terms of assembly, part of a complex composed of FtsB, FtsL and FtsQ.

The protein resides in the cell inner membrane. Essential cell division protein. May link together the upstream cell division proteins, which are predominantly cytoplasmic, with the downstream cell division proteins, which are predominantly periplasmic. May control correct divisome assembly. This Neisseria meningitidis serogroup B (strain ATCC BAA-335 / MC58) protein is Cell division protein FtsQ.